A 177-amino-acid chain; its full sequence is tRNA (cytidine(56)-2'-O)-methyltransferase (177 aa).

S-adenosyl-L-methionine is bound by residues Leu-84 and 109 to 113; that span reads GAEKV.

The protein belongs to the aTrm56 family. Homodimer.

It localises to the cytoplasm. It carries out the reaction cytidine(56) in tRNA + S-adenosyl-L-methionine = 2'-O-methylcytidine(56) in tRNA + S-adenosyl-L-homocysteine + H(+). Specifically catalyzes the AdoMet-dependent 2'-O-ribose methylation of cytidine at position 56 in tRNAs. The protein is tRNA (cytidine(56)-2'-O)-methyltransferase of Methanosarcina barkeri (strain Fusaro / DSM 804).